Reading from the N-terminus, the 1020-residue chain is MRSSCCDMCSQEEFQAQRSQLVALLISGSLEGFESILDWLLSWDVLSREDYEGLSLPGQPLSHSARRLLDTVWNKGVWGCQKLLEAVQEAQANSHTFELYGSWDTHSLHPTRDLQSHRPAIVRRLYNHVEAMLELAREGGFLSQYECEEIRLPIFTSSQRARRLLDLAAVKANGLAAFLLQHVRELPAPLPLPYEAAECQKFISKLRTMVLTQSRFLSTYDGSENLCLEDIYTENILELQTEVGTAGALQKSPAILGLEDLFDTHGHLNRDADTILVVGEAGSGKSTLLQRLHLLWATGRSFQEFLFIFPFSCRQLQCVAKPLSLRTLLFEHCCWPDVAQDDVFQFLLDHPDRVLLTFDGLDEFKFRFTDRERHCSPIDPTSVQTLLFNLLQGNLLKNACKVLTSRPDAVSALLRKFVRTELQLKGFSEEGIQLYLRKHHREPGVADRLIQLIQATSALHGLCHLPVFSWMVSRCHRELLLQNRGFPTTSTDMYLLILQHFLLHASPPDSSPLGLGPGLLQSRLSTLLHLGHLALRGLAMSCYVFSAQQLQAAQVDSDDISLGFLVRAQSSVPGSKAPLEFLHITFQCFFAAFYLAVSADTSVASLKHLFSCGRLGSSLLGRLLPNLCIQGSRVKKGSEAALLQKAEPHNLQITAAFLAGLLSQQHRDLLAACQVSERVLLQRQARARSCLAHSLREHFHSIPPAVPGETKSMHAMPGFIWLIRSLYEMQEEQLAQEAVRRLDIGHLKLTFCRVGPAECAALAFVLQHLQRPVALQLDYNSVGDVGVEQLRPCLGVCTALYLRDNNISDRGARTLVECALRCEQLQKLALFNNKLTDACACSMAKLLAHKQNFLSLRVGNNHITAAGAEVLAQGLKSNTSLKFLGFWGNSVGDKGTQALAEVVADHQNLKWLSLVGNNIGSMGAEALALMLEKNKSLEELCLEENHICDEGVYSLAEGLKRNSTLKFLKLSNNGITYRGAEALLQALSRNSAILEVWLRGNTFSLEEIQTLSSRDARLLL.

2 consecutive CARD domains span residues 6 to 104 (CDMC…GSWD) and 106 to 200 (HSLH…AECQ). An ATG16L1-binding motif motif is present at residues 43 to 57 (WDVLSREDYEGLSLP). Residues Thr219, Tyr232, Thr233, Gly282, Ser283, Gly284, Lys285, Ser286, and Thr287 each contribute to the ADP site. A required for CARD9 binding region spans residues 221-254 (DGSENLCLEDIYTENILELQTEVGTAGALQKSPA). Residues 273-600 (DTILVVGEAG…AAFYLAVSAD (328 aa)) enclose the NACHT domain. Cys375 is lipidated: S-palmitoyl cysteine. An ADP-binding site is contributed by His583. 10 LRR repeats span residues 685-709 (ARARSCLAHSLREHFHSIPPAVPGE), 726-749 (LYEMQEEQLAQEAVRRLDIGHLKL), 766-792 (LQHLQRPVALQLDYNSVGDVGVEQLRP), 794-817 (LGVCTALYLRDNNISDRGARTLVE), 822-845 (CEQLQKLALFNNKLTDACACSMAK), 850-873 (KQNFLSLRVGNNHITAAGAEVLAQ), 906-929 (HQNLKWLSLVGNNIGSMGAEALAL), 934-962 (NKSLEELCLEENHICDEGVYSLAEGLKRN), 963-985 (STLKFLKLSNNGITYRGAEALLQ), and 1005-1019 (LEEIQTLSSRDARLL).

This sequence belongs to the NOD1-NOD2 family. In terms of assembly, homooligomer: homooligomerizes following muramyl dipeptide (MDP)-binding, promoting RIPK2 recruitment. Interacts (via CARD domain) with RIPK2 (via CARD domain). Following RIPK2 recruitment, RIPK2 homooligomerizes via its CARD domain and forms long filaments named RIPosomes. Interacts (via CARD domain) with ubiquitin; inhibiting interaction with RIPK2. Component of a signaling complex consisting of ARHGEF2, NOD2 and RIPK2. Interacts with ANKRD17 (via N-terminus). Interacts with HSPA1A; the interaction enhances NOD2 stability. Interacts (via both CARD domains) with HSP90; the interaction enhances NOD2 stability. Interacts (via CARD domain) with SOCS3; the interaction promotes NOD2 degradation. Interacts (via CARD domain) with ERBIN; the interaction inhibits activation of NOD2. Interacts with MAPKBP1; the interaction is enhanced in the presence of muramyl dipeptide (MDP) and inhibits NOD2 homooligomerization and activation. Interacts with INAVA; the interaction takes place upon Pattern recognition receptor (PRR) stimulation. Interacts (via NACHT domain) with CARD9. Interacts (via CARD domain) with CASP1; this interaction leads to IL1B processing. Also interacts with CASP4. Interacts with NLRP1; this interaction is enhanced in the presence of muramyl dipeptide (MDP) and leads to increased IL1B release. Interacts with NLRP12; this interaction promotes degradation of NOD2 through the ubiquitin-proteasome pathway. Interacts with ANKHD1, C10orf67, CHMP5, DOCK7, ENTR1, KRT15, LDOC1, PPP1R12C, PPP2R3B, TRIM41 and VIM. Interacts with MAVS; interaction takes place following single-stranded RNA (ssRNA)-binding. Interacts with ATG16L1. Interacts with Irgm1; promoting Irgm1 'Lys-63'-linked polyubiquitination, which is required for interactions with the core autophagy factors. Palmitoylated by ZDHHC5; palmitoylation is required for proper recruitment to the bacterial entry site and hence for proper signaling upon cognate peptidoglycan detection. Palmitoylation promotes localization to the cell membrane. Palmitoylation protects from SQSTM1/p62-dependent autophagic degradation. Post-translationally, polyubiquitinated by TRIM27, leading to proteasome-mediated degradation. Polyubiquitinated and degraded following muramyl dipeptide (MDP) stimulation, conferring MDP tolerance and preventing septic shock. In terms of processing, degraded via selective autophagy following interaction with Irgm1. Irgm1 promotes NOD2-RIPK2 RIPosome recruitment to autophagosome membranes, promoting their SQSTM1/p62-dependent autophagic degradation. O-glycosylated by OGT, O-GlcNAcylation increases protein stability. As to expression, expressed in monocytes, macrophages, dendritic cells, hepatocytes, preadipocytes, epithelial cells of oral cavity, lung and intestine. In intestine, highly expressed in ileal Paneth cells of the crypt and in intestinal stem cells. Also expressed in neurons of several brain regions including the hypothalamus.

The protein localises to the cell membrane. The protein resides in the basolateral cell membrane. It localises to the cytoplasm. It is found in the mitochondrion. Its activity is regulated as follows. ADP-binding promotes an inactive closed conformation. Functionally, pattern recognition receptor (PRR) that detects bacterial peptidoglycan fragments and other danger signals and plays an important role in gastrointestinal immunity. Specifically activated by muramyl dipeptide (MDP), a fragment of bacterial peptidoglycan found in every bacterial peptidoglycan type. NOD2 specifically recognizes and binds 6-O-phospho-MDP, the phosphorylated form of MDP, which is generated by NAGK. 6-O-phospho-MDP-binding triggers oligomerization that facilitates the binding and subsequent activation of the proximal adapter receptor-interacting RIPK2. Following recruitment, RIPK2 undergoes 'Met-1'- (linear) and 'Lys-63'-linked polyubiquitination by E3 ubiquitin-protein ligases XIAP, BIRC2, BIRC3 and the LUBAC complex, becoming a scaffolding protein for downstream effectors, triggering activation of the NF-kappa-B and MAP kinases signaling. This in turn leads to the transcriptional activation of hundreds of genes involved in immune response. Its ability to detect bacterial MDP plays a central role in maintaining the equilibrium between intestinal microbiota and host immune responses to control inflammation. An imbalance in this relationship results in dysbiosis, whereby pathogenic bacteria prevail on commensals, causing damage in the intestinal epithelial barrier as well as allowing bacterial invasion and inflammation. Acts as a regulator of appetite by sensing MDP in a subset of brain neurons: microbiota-derived MDP reach the brain, where they bind and activate NOD2 in inhibitory hypothalamic neurons, decreasing neuronal activity, thereby regulating satiety and body temperature. NOD2-dependent MDP-sensing of bacterial cell walls in the intestinal epithelial compartment contributes to sustained postnatal growth upon undernutrition. Also plays a role in antiviral response by acting as a sensor of single-stranded RNA (ssRNA) from viruses: upon ssRNA-binding, interacts with MAVS, leading to activation of interferon regulatory factor-3/IRF3 and expression of type I interferon. Also acts as a regulator of autophagy in dendritic cells via its interaction with ATG16L1, possibly by recruiting ATG16L1 at the site of bacterial entry. NOD2 activation in the small intestine crypt also contributes to intestinal stem cells survival and function: acts by promoting mitophagy via its association with ATG16L1. In addition to its main role in innate immunity, also regulates the adaptive immune system by acting as regulator of helper T-cell and regulatory T-cells (Tregs). Besides recognizing pathogens, also involved in the endoplasmic reticulum stress response: acts by sensing and binding to the cytosolic metabolite sphingosine-1-phosphate generated in response to endoplasmic reticulum stress, initiating an inflammation process that leads to activation of the NF-kappa-B and MAP kinases signaling. May also be involved in NLRP1 activation following activation by MDP, leading to CASP1 activation and IL1B release in macrophages. In Mus musculus (Mouse), this protein is Nucleotide-binding oligomerization domain-containing protein 2.